Reading from the N-terminus, the 271-residue chain is Formamidopyrimidine-DNA glycosylase (271 aa).

Pro-2 (schiff-base intermediate with DNA) is an active-site residue. The active-site Proton donor is Glu-3. Lys-58 functions as the Proton donor; for beta-elimination activity in the catalytic mechanism. The DNA site is built by His-90, Arg-108, and Arg-151. An FPG-type; degenerate zinc finger spans residues 236 to 271 (QVYGRDGQPCHRDDGGTIRRFAQGGRSTWYCPRCQR). Arg-261 acts as the Proton donor; for delta-elimination activity in catalysis.

It belongs to the FPG family. In terms of assembly, monomer. Zn(2+) serves as cofactor.

It catalyses the reaction Hydrolysis of DNA containing ring-opened 7-methylguanine residues, releasing 2,6-diamino-4-hydroxy-5-(N-methyl)formamidopyrimidine.. It carries out the reaction 2'-deoxyribonucleotide-(2'-deoxyribose 5'-phosphate)-2'-deoxyribonucleotide-DNA = a 3'-end 2'-deoxyribonucleotide-(2,3-dehydro-2,3-deoxyribose 5'-phosphate)-DNA + a 5'-end 5'-phospho-2'-deoxyribonucleoside-DNA + H(+). Functionally, involved in base excision repair of DNA damaged by oxidation or by mutagenic agents. Acts as a DNA glycosylase that recognizes and removes damaged bases. Has a preference for oxidized purines, such as 7,8-dihydro-8-oxoguanine (8-oxoG). Has AP (apurinic/apyrimidinic) lyase activity and introduces nicks in the DNA strand. Cleaves the DNA backbone by beta-delta elimination to generate a single-strand break at the site of the removed base with both 3'- and 5'-phosphates. In Erythrobacter litoralis (strain HTCC2594), this protein is Formamidopyrimidine-DNA glycosylase.